The primary structure comprises 149 residues: Glycine cleavage system H protein (149 aa).

A Lipoyl-binding domain is found at leucine 23–asparagine 104. Lysine 64 carries the N6-lipoyllysine modification.

This sequence belongs to the GcvH family. The glycine cleavage system is composed of four proteins: P, T, L and H. Requires (R)-lipoate as cofactor.

Functionally, the glycine cleavage system catalyzes the degradation of glycine. The H protein shuttles the methylamine group of glycine from the P protein to the T protein. This is Glycine cleavage system H protein from Polynucleobacter necessarius subsp. necessarius (strain STIR1).